A 205-amino-acid polypeptide reads, in one-letter code: Putative 3-methyladenine DNA glycosylase (205 aa).

It belongs to the DNA glycosylase MPG family.

This is Putative 3-methyladenine DNA glycosylase from Bacillus cereus (strain ZK / E33L).